Reading from the N-terminus, the 515-residue chain is Ribonuclease Y (515 aa).

Residues 6-26 (LTSFVIITLSLAVGLTGGYYG) form a helical membrane-spanning segment. The KH domain maps to 205–290 (TVSVVPLPND…EMVEKARKEI (86 aa)). Positions 331 to 424 (VLRHSVEVAH…VQAADAISAS (94 aa)) constitute an HD domain.

Belongs to the RNase Y family.

The protein localises to the cell membrane. Functionally, endoribonuclease that initiates mRNA decay. This Syntrophomonas wolfei subsp. wolfei (strain DSM 2245B / Goettingen) protein is Ribonuclease Y.